A 477-amino-acid chain; its full sequence is Angiotensinogen (477 aa).

A signal peptide spans methionine 1–glycine 24. Cysteine 42 and cysteine 161 are disulfide-bonded. 2 N-linked (GlcNAc...) asparagine glycosylation sites follow: asparagine 295 and asparagine 319.

It belongs to the serpin family. In response to low blood pressure, the enzyme renin/REN cleaves angiotensinogen to produce angiotensin-1. Angiotensin-1 is a substrate of ACE (angiotensin converting enzyme) that removes a dipeptide to yield the physiologically active peptide angiotensin-2. Angiotensin-1 and angiotensin-2 can be further processed to generate angiotensin-3, angiotensin-4. Angiotensin 1-9 is cleaved from angiotensin-1 by ACE2 and can be further processed by ACE to produce angiotensin 1-7, angiotensin 1-5 and angiotensin 1-4. Angiotensin 1-7 has also been proposed to be cleaved from angiotensin-2 by ACE2 or from angiotensin-1 by MME (neprilysin). In terms of processing, the disulfide bond is labile. Angiotensinogen is present in the circulation in a near 40:60 ratio with the oxidized disulfide-bonded form, which preferentially interacts with receptor-bound renin.

It localises to the secreted. Essential component of the renin-angiotensin system (RAS), a potent regulator of blood pressure, body fluid and electrolyte homeostasis. In terms of biological role, acts directly on vascular smooth muscle as a potent vasoconstrictor, affects cardiac contractility and heart rate through its action on the sympathetic nervous system, and alters renal sodium and water absorption through its ability to stimulate the zona glomerulosa cells of the adrenal cortex to synthesize and secrete aldosterone. Acts by binding to angiotensin receptors AGTR1 and AGTR2. Also binds the DEAR/FBXW7-AS1 receptor. Its function is as follows. Stimulates aldosterone release. Functionally, is a ligand for the G-protein coupled receptor MAS1. Has vasodilator and antidiuretic effects. Has an antithrombotic effect that involves MAS1-mediated release of nitric oxide from platelets. This is Angiotensinogen (Agt) from Rattus norvegicus (Rat).